The following is a 228-amino-acid chain: Probable septum site-determining protein MinC (228 aa).

Belongs to the MinC family. As to quaternary structure, interacts with MinD and FtsZ.

Its function is as follows. Cell division inhibitor that blocks the formation of polar Z ring septums. Rapidly oscillates between the poles of the cell to destabilize FtsZ filaments that have formed before they mature into polar Z rings. Prevents FtsZ polymerization. In Bacillus cytotoxicus (strain DSM 22905 / CIP 110041 / 391-98 / NVH 391-98), this protein is Probable septum site-determining protein MinC.